Consider the following 630-residue polypeptide: NUAK family SNF1-like kinase 2 (630 aa).

Position 1 is an N-acetylmethionine (Met-1). One can recognise a Protein kinase domain in the interval 57-307 (YEFLETLGKG…LEDVASHWWV (251 aa)). Residues 63–71 (LGKGTYGKV) and Lys-85 contribute to the ATP site. Catalysis depends on Asp-179, which acts as the Proton acceptor. Thr-212 carries the phosphothreonine modification. 2 disordered regions span residues 361-504 (HVPG…RLHR) and 521-566 (GTAP…LDLP). A compositionally biased stretch (low complexity) spans 464–476 (SGYYSSPEPSESG). Phosphoserine is present on residues Ser-529, Ser-550, Ser-553, and Ser-579.

Belongs to the protein kinase superfamily. CAMK Ser/Thr protein kinase family. SNF1 subfamily. It depends on Mg(2+) as a cofactor. Post-translationally, phosphorylated at Thr-212 by STK11/LKB1 in complex with STE20-related adapter-alpha (STRADA) pseudo kinase and CAB39. Autophosphorylation is also possible at Thr-212. In terms of tissue distribution, expressed in liver, skin, testis, uterus, ovary, adrenal gland and brain (at protein level). Expressed in kidney, heart, skin, spleen, lung, uterus, liver and the exocrine and endocrine compartments of the human pancreas. A kinase-inactive isoform also appears to be expressed in the skin, spleen, lung, uterus, liver and testis.

The catalysed reaction is L-seryl-[protein] + ATP = O-phospho-L-seryl-[protein] + ADP + H(+). It carries out the reaction L-threonyl-[protein] + ATP = O-phospho-L-threonyl-[protein] + ADP + H(+). Its activity is regulated as follows. Activated by phosphorylation on Thr-212 by STK11 in complex with STE20-related adapter-alpha (STRAD alpha) pseudo kinase and CAB39. Stress-activated kinase involved in tolerance to glucose starvation. Induces cell-cell detachment by increasing F-actin conversion to G-actin. Expression is induced by CD95 or TNF-alpha, via NF-kappa-B. Protects cells from CD95-mediated apoptosis and is required for the increased motility and invasiveness of CD95-activated tumor cells. Phosphorylates LATS1 and LATS2. Plays a key role in neural tube closure during embryonic development through LATS2 phosphorylation and regulation of the nuclear localization of YAP1 a critical downstream regulatory target in the Hippo signaling pathway. This Rattus norvegicus (Rat) protein is NUAK family SNF1-like kinase 2.